Reading from the N-terminus, the 146-residue chain is MKTLLVLALLLLSVSVQAKVYDRCEFARILKKSGMDGYRGVSLANWVCLAKWESDFNTKAINHNVGSTDYGIFQINSRYWCNDGKTPKAVNACHISCKVLLDDDLSQDIECAKRVVRDPLGVKAWVAWRAHCQNKDVSQYIRGCKL.

The first 18 residues, Met1–Ala18, serve as a signal peptide directing secretion. The 128-residue stretch at Lys19–Leu146 folds into the C-type lysozyme domain. 4 cysteine pairs are disulfide-bonded: Cys24–Cys144, Cys48–Cys132, Cys81–Cys97, and Cys93–Cys111. Catalysis depends on residues Glu53 and Asp69.

This sequence belongs to the glycosyl hydrolase 22 family. As to quaternary structure, monomer.

It localises to the secreted. The enzyme catalyses Hydrolysis of (1-&gt;4)-beta-linkages between N-acetylmuramic acid and N-acetyl-D-glucosamine residues in a peptidoglycan and between N-acetyl-D-glucosamine residues in chitodextrins.. In terms of biological role, lysozymes have primarily a bacteriolytic function; those in tissues and body fluids are associated with the monocyte-macrophage system and enhance the activity of immunoagents. The protein is Lysozyme C-2 of Sus scrofa (Pig).